Reading from the N-terminus, the 123-residue chain is UPF0102 protein PputGB1_4524 (123 aa).

Belongs to the UPF0102 family.

The polypeptide is UPF0102 protein PputGB1_4524 (Pseudomonas putida (strain GB-1)).